The chain runs to 92 residues: Small ribosomal subunit protein bS21A (92 aa).

Basic and acidic residues predominate over residues 25–52 (GVFREMKQRRSYEKPSERKTREKSEAIR). Positions 25 to 92 (GVFREMKQRR…LPQTAARPAG (68 aa)) are disordered.

The protein belongs to the bacterial ribosomal protein bS21 family.

This is Small ribosomal subunit protein bS21A from Bradyrhizobium diazoefficiens (strain JCM 10833 / BCRC 13528 / IAM 13628 / NBRC 14792 / USDA 110).